A 190-amino-acid chain; its full sequence is Ribonuclease HII (190 aa).

Residues Met-1–Asp-190 enclose the RNase H type-2 domain. Residues Asp-5, Glu-6, and Asp-101 each coordinate a divalent metal cation.

Belongs to the RNase HII family. The cofactor is Mn(2+). It depends on Mg(2+) as a cofactor.

It localises to the cytoplasm. It carries out the reaction Endonucleolytic cleavage to 5'-phosphomonoester.. Endonuclease that specifically degrades the RNA of RNA-DNA hybrids. The chain is Ribonuclease HII (rnhB) from Synechocystis sp. (strain ATCC 27184 / PCC 6803 / Kazusa).